Consider the following 448-residue polypeptide: Asparagine--tRNA ligase (448 aa).

Belongs to the class-II aminoacyl-tRNA synthetase family. In terms of assembly, homodimer.

The protein localises to the cytoplasm. The catalysed reaction is tRNA(Asn) + L-asparagine + ATP = L-asparaginyl-tRNA(Asn) + AMP + diphosphate + H(+). The polypeptide is Asparagine--tRNA ligase (Streptococcus thermophilus (strain ATCC BAA-491 / LMD-9)).